The primary structure comprises 91 residues: Cell division protein ZapA (91 aa).

A coiled-coil region spans residues 58-91; it reads LTAVNIASEYLKLKEEYNRLREQLKKEKDGERDD.

The protein belongs to the ZapA family. Type 2 subfamily. Homodimer. Interacts with FtsZ.

It is found in the cytoplasm. In terms of biological role, activator of cell division through the inhibition of FtsZ GTPase activity, therefore promoting FtsZ assembly into bundles of protofilaments necessary for the formation of the division Z ring. It is recruited early at mid-cell but it is not essential for cell division. The polypeptide is Cell division protein ZapA (Geobacillus kaustophilus (strain HTA426)).